The following is a 301-amino-acid chain: tRNA uridine(34) hydroxylase (301 aa).

The region spanning 121–212 (NDKDTLVLDS…YLKNIKKKES (92 aa)) is the Rhodanese domain. The Cysteine persulfide intermediate role is filled by Cys172.

It belongs to the TrhO family.

The enzyme catalyses uridine(34) in tRNA + AH2 + O2 = 5-hydroxyuridine(34) in tRNA + A + H2O. Its function is as follows. Catalyzes oxygen-dependent 5-hydroxyuridine (ho5U) modification at position 34 in tRNAs. The protein is tRNA uridine(34) hydroxylase of Pelagibacter ubique (strain HTCC1062).